A 234-amino-acid chain; its full sequence is MTLLYEGKAKRIFSTNQENELRVEYKDEVTAGNGAKKDTMAGKGRLNNQITSIIFKYLQENGIESHFIKQLSETEQLVKPVKIIPLEVVVRNIASGSITKRLGFENGEVFREPLVEFFYKNDALNDPLITDDHIKLLNIATDKDIETLKTKALEINQVLKQLMHAMSLKLVDFKIEFGKTETGQILLADEISPDTCRIWDKATNANFDKDVYRNNTGSLIETYQIFLNKLEDLK.

The protein belongs to the SAICAR synthetase family.

It carries out the reaction 5-amino-1-(5-phospho-D-ribosyl)imidazole-4-carboxylate + L-aspartate + ATP = (2S)-2-[5-amino-1-(5-phospho-beta-D-ribosyl)imidazole-4-carboxamido]succinate + ADP + phosphate + 2 H(+). Its pathway is purine metabolism; IMP biosynthesis via de novo pathway; 5-amino-1-(5-phospho-D-ribosyl)imidazole-4-carboxamide from 5-amino-1-(5-phospho-D-ribosyl)imidazole-4-carboxylate: step 1/2. This chain is Phosphoribosylaminoimidazole-succinocarboxamide synthase, found in Staphylococcus aureus (strain MRSA252).